A 162-amino-acid chain; its full sequence is E3 ubiquitin-protein ligase LAP (162 aa).

The Cytoplasmic portion of the chain corresponds to 1 to 78; that stretch reads MEGSDNTNTH…RWKCSFMYCN (78 aa). The RING-CH-type zinc-finger motif lies at 3–61; it reads GSDNTNTHCWICKDEYNVSTNFCNCKNEFKIVHKNCLEEWINFSHNTKCKICNGKYNIK. Cysteine 11, cysteine 14, cysteine 25, cysteine 27, histidine 35, cysteine 38, cysteine 51, and cysteine 54 together coordinate Zn(2+). A helical transmembrane segment spans residues 79-99; sequence VPAICVSLICLLLLPLTILLV. The Lumenal segment spans residues 100–121; that stretch reads KFNLKSMLENIENRDLIALISA. Residues 122 to 142 traverse the membrane as a helical segment; sequence MAYSLPCVVGFITVVHILIAL. The Cytoplasmic segment spans residues 143-162; the sequence is YDYYLAAKSDNTTYQVYEYI.

This sequence belongs to the poxviridae LAP protein family.

The protein localises to the host membrane. Its subcellular location is the host Golgi apparatus. It is found in the host trans-Golgi network membrane. The protein resides in the host early endosome membrane. It carries out the reaction S-ubiquitinyl-[E2 ubiquitin-conjugating enzyme]-L-cysteine + [acceptor protein]-L-lysine = [E2 ubiquitin-conjugating enzyme]-L-cysteine + N(6)-ubiquitinyl-[acceptor protein]-L-lysine.. In terms of biological role, E3 ubiquitin-protein ligase which promotes ubiquitination and subsequent degradation of host MHC-I and CD4 molecules, presumably to prevent lysis of infected cells by cytotoxic T-lymphocytes and NK cell. Binds target molecules through transmembrane interaction. The result of this ubiquitination is the enhancement of the endocytosis of the target chain and the delivery to the lysosome, where it is proteolytically destroyed. This Lumpy skin disease virus (LSDV) protein is E3 ubiquitin-protein ligase LAP (LW010).